Reading from the N-terminus, the 172-residue chain is Co-chaperone protein HscB homolog (172 aa).

Positions 2–74 (NHFELFGLVE…LRRAEYLLSL (73 aa)) constitute a J domain.

Belongs to the HscB family. Interacts with HscA and stimulates its ATPase activity.

Functionally, co-chaperone involved in the maturation of iron-sulfur cluster-containing proteins. Seems to help targeting proteins to be folded toward HscA. In Aeromonas salmonicida (strain A449), this protein is Co-chaperone protein HscB homolog.